Reading from the N-terminus, the 161-residue chain is HMG1/2-like protein (161 aa).

3 disordered regions span residues 1-46 (MKGA…KRAP), 60-91 (FKQKNPKNKSVAAVGKAAGERWKSLSESEKAP), and 113-161 (GESA…DDDE). Composition is skewed to basic and acidic residues over residues 10–27 (AKADAKLAVKSKGAEKPA) and 77–89 (AGERWKSLSESEK). The HMG box DNA-binding region spans 42 to 111 (PKRAPSAFFV…EYNKAIAAYN (70 aa)). Positions 114-123 (ESAAAAAPKK) are enriched in low complexity. Residues 145–161 (NDDDDDEGSDEDEDDDE) show a composition bias toward acidic residues.

The protein belongs to the HMGB family.

The protein localises to the nucleus. This Triticum aestivum (Wheat) protein is HMG1/2-like protein.